An 88-amino-acid chain; its full sequence is Fe-S protein maturation auxiliary factor SufT (88 aa).

It belongs to the MIP18 family.

In terms of biological role, involved in the maturation of iron-sulfur (Fe-S) proteins. May function as a Fe-S cluster carrier. Is required for S.aureus growth under conditions that impose a high demand for lipoic acid, likely via a role in the maturation of the lipoate synthase LipA. Is non-essential for growth in conditions that impose a low demand for lipoic acid or Fe-S clusters, such as fermentative growth. Also seems to be involved in the maturation of AcnA, LeuCD and IlvD proteins, that utilize Fe-S cluster cofactors, and its role increases under conditions of high-demand for Fe-S clusters (respiratory growth). Is not involved in the repair of Fe-S clusters damaged by reactive oxygen species or in the physical protection of Fe-S clusters from oxidants. Displays synergy with the Fe-S cluster carrier Nfu. The chain is Fe-S protein maturation auxiliary factor SufT from Staphylococcus aureus (strain USA300).